The chain runs to 313 residues: tRNA dimethylallyltransferase (313 aa).

Residue 9–16 (GPTAVGKT) coordinates ATP. 11 to 16 (TAVGKT) lines the substrate pocket. The interaction with substrate tRNA stretch occupies residues 34–37 (DSMQ).

The protein belongs to the IPP transferase family. In terms of assembly, monomer. The cofactor is Mg(2+).

It carries out the reaction adenosine(37) in tRNA + dimethylallyl diphosphate = N(6)-dimethylallyladenosine(37) in tRNA + diphosphate. Its function is as follows. Catalyzes the transfer of a dimethylallyl group onto the adenine at position 37 in tRNAs that read codons beginning with uridine, leading to the formation of N6-(dimethylallyl)adenosine (i(6)A). In Lachnoclostridium phytofermentans (strain ATCC 700394 / DSM 18823 / ISDg) (Clostridium phytofermentans), this protein is tRNA dimethylallyltransferase.